Reading from the N-terminus, the 207-residue chain is Large ribosomal subunit protein uL4 (207 aa).

Positions 45-78 are disordered; sequence RQGTHAVKNRSARRGGGRKPWRQKGTGRARQGSI. The span at 51–71 shows a compositional bias: basic residues; it reads VKNRSARRGGGRKPWRQKGTG.

It belongs to the universal ribosomal protein uL4 family. In terms of assembly, part of the 50S ribosomal subunit.

One of the primary rRNA binding proteins, this protein initially binds near the 5'-end of the 23S rRNA. It is important during the early stages of 50S assembly. It makes multiple contacts with different domains of the 23S rRNA in the assembled 50S subunit and ribosome. Functionally, forms part of the polypeptide exit tunnel. In Lactiplantibacillus plantarum (strain ATCC BAA-793 / NCIMB 8826 / WCFS1) (Lactobacillus plantarum), this protein is Large ribosomal subunit protein uL4.